Consider the following 743-residue polypeptide: GTPase-activating protein gyp7 (743 aa).

One can recognise a Rab-GAP TBC domain in the interval 411-633; that stretch reads GIQPSLRKEV…KLWDVLFTNY (223 aa).

Its subcellular location is the cytoplasm. It localises to the nucleus. Its function is as follows. Most effectively accelerates the intrinsic GTPase activity of ypt7. The chain is GTPase-activating protein gyp7 from Schizosaccharomyces pombe (strain 972 / ATCC 24843) (Fission yeast).